We begin with the raw amino-acid sequence, 416 residues long: ORC1-type DNA replication protein 9 (416 aa).

Residues 79-83 (SGKSL), Tyr226, and Arg238 contribute to the ATP site.

This sequence belongs to the CDC6/cdc18 family.

In terms of biological role, involved in regulation of DNA replication. The sequence is that of ORC1-type DNA replication protein 9 (cdc6i) from Haloarcula marismortui (strain ATCC 43049 / DSM 3752 / JCM 8966 / VKM B-1809) (Halobacterium marismortui).